The following is a 545-amino-acid chain: Glucans biosynthesis protein G (545 aa).

The first 34 residues, 1–34, serve as a signal peptide directing secretion; the sequence is MVSLLRCQSFKPSSSLICSLALSAAFALSSSAFA. The interval 38–60 is disordered; it reads KPAENKPATPVVSPPKATAQPAN.

It belongs to the OpgD/OpgG family.

The protein resides in the periplasm. It participates in glycan metabolism; osmoregulated periplasmic glucan (OPG) biosynthesis. Its function is as follows. Involved in the biosynthesis of osmoregulated periplasmic glucans (OPGs). In Shewanella sp. (strain MR-4), this protein is Glucans biosynthesis protein G.